Consider the following 139-residue polypeptide: Peptide methionine sulfoxide reductase B5 (139 aa).

Residue alanine 2 is modified to N-acetylalanine. The MsrB domain maps to 12 to 133 (EEEWRAVLSP…NSVSISFNPA (122 aa)). The Zn(2+) site is built by cysteine 51, cysteine 54, cysteine 97, and cysteine 100. The cysteines at positions 69 and 122 are disulfide-linked. Cysteine 122 acts as the Nucleophile in catalysis.

Belongs to the MsrB Met sulfoxide reductase family. It depends on Zn(2+) as a cofactor.

Its subcellular location is the cytoplasm. The protein localises to the cytosol. It catalyses the reaction L-methionyl-[protein] + [thioredoxin]-disulfide + H2O = L-methionyl-(R)-S-oxide-[protein] + [thioredoxin]-dithiol. Functionally, catalyzes the reduction of methionine sulfoxide (MetSO) to methionine in proteins. Plays a protective role against oxidative stress by restoring activity to proteins that have been inactivated by methionine oxidation. MSRB family specifically reduces the MetSO R-enantiomer. The sequence is that of Peptide methionine sulfoxide reductase B5 (MSRB5) from Arabidopsis thaliana (Mouse-ear cress).